The chain runs to 433 residues: Glutamate-1-semialdehyde 2,1-aminomutase (433 aa).

K273 is modified (N6-(pyridoxal phosphate)lysine).

The protein belongs to the class-III pyridoxal-phosphate-dependent aminotransferase family. HemL subfamily. As to quaternary structure, homodimer. The cofactor is pyridoxal 5'-phosphate.

Its subcellular location is the cytoplasm. It catalyses the reaction (S)-4-amino-5-oxopentanoate = 5-aminolevulinate. It functions in the pathway porphyrin-containing compound metabolism; protoporphyrin-IX biosynthesis; 5-aminolevulinate from L-glutamyl-tRNA(Glu): step 2/2. This chain is Glutamate-1-semialdehyde 2,1-aminomutase, found in Ralstonia nicotianae (strain ATCC BAA-1114 / GMI1000) (Ralstonia solanacearum).